We begin with the raw amino-acid sequence, 517 residues long: DNA relaxase MbeA (517 aa).

Catalysis depends on Tyr-19, which acts as the O-(5'-phospho-DNA)-tyrosine intermediate. His-97, Glu-104, and Asn-106 together coordinate a divalent metal cation. 3 disordered regions span residues 281–310 (YSPV…QEGR), 380–405 (PSVR…VTQS), and 496–517 (SLER…SLGW). The span at 297 to 310 (GRGERGDDAAQEGR) shows a compositional bias: basic and acidic residues. Basic and acidic residues predominate over residues 496 to 510 (SLERERQPEIQERTL).

To E.coli MbaA and MbkA. In terms of assembly, interacts with MbeB and MbeC to form the relaxosome. Requires Mn(2+) as cofactor. It depends on Co(2+) as a cofactor. The cofactor is Ni(2+).

It carries out the reaction ATP-independent breakage of single-stranded DNA, followed by passage and rejoining.. Relaxase involved in plasmid ColE1 conjugative mobilization and is thus essential to promote the specific transfer of the plasmid during conjugation. First catalyzes the specific cleavage of one of the DNA strands at oriT, forming a covalent 5'-phosphotyrosine intermediate. The nic site corresponds to 5'-(1469)CTGG/CTTA(1462)-3' in the cleaved strand. The cleaved strand is then transferred through the dedicated type IV secretion apparatus. MbeA remains covalently linked at the 5' end of the strand, and once in the recipient cell, it probably catalyzes the rejoining of the two ends of the strand, re-forming the circular plasmid DNA. Is functional in vitro without a requirement for the conjugative accessory proteins. The polypeptide is DNA relaxase MbeA (mbeA) (Escherichia coli).